A 376-amino-acid chain; its full sequence is Dual-specificity RNA methyltransferase RlmN (376 aa).

The active-site Proton acceptor is the Glu95. A Radical SAM core domain is found at 101–339; sequence EKERATLCVS…CIVRRPRGDD (239 aa). An intrachain disulfide couples Cys108 to Cys344. Residues Cys115, Cys119, and Cys122 each contribute to the [4Fe-4S] cluster site. Residues 169 to 170, Ser201, 223 to 225, and Asn301 contribute to the S-adenosyl-L-methionine site; these read GE and SLH. Cys344 (S-methylcysteine intermediate) is an active-site residue.

The protein belongs to the radical SAM superfamily. RlmN family. Requires [4Fe-4S] cluster as cofactor.

It is found in the cytoplasm. The catalysed reaction is adenosine(2503) in 23S rRNA + 2 reduced [2Fe-2S]-[ferredoxin] + 2 S-adenosyl-L-methionine = 2-methyladenosine(2503) in 23S rRNA + 5'-deoxyadenosine + L-methionine + 2 oxidized [2Fe-2S]-[ferredoxin] + S-adenosyl-L-homocysteine. The enzyme catalyses adenosine(37) in tRNA + 2 reduced [2Fe-2S]-[ferredoxin] + 2 S-adenosyl-L-methionine = 2-methyladenosine(37) in tRNA + 5'-deoxyadenosine + L-methionine + 2 oxidized [2Fe-2S]-[ferredoxin] + S-adenosyl-L-homocysteine. Specifically methylates position 2 of adenine 2503 in 23S rRNA and position 2 of adenine 37 in tRNAs. m2A2503 modification seems to play a crucial role in the proofreading step occurring at the peptidyl transferase center and thus would serve to optimize ribosomal fidelity. The protein is Dual-specificity RNA methyltransferase RlmN of Pseudoalteromonas translucida (strain TAC 125).